A 547-amino-acid polypeptide reads, in one-letter code: Membrane transporter D1 (547 aa).

Topologically, residues 1-2 are cytoplasmic; sequence MR. The helical transmembrane segment at 3-25 threads the bilayer; it reads ASVMLCAALGGFLFGYDTGVINA. The Extracellular segment spans residues 26-43; the sequence is ALFQMKDHFGFSEHSWQY. A helical membrane pass occupies residues 44-64; the sequence is ALIVAIAIAGAFVGAFISGFI. Residues 65-78 lie on the Cytoplasmic side of the membrane; sequence SAAFGRRPCIAVAD. A helical transmembrane segment spans residues 79-99; sequence ALFVIGSVLMGAAPNVEVVLV. Topologically, residues 100–101 are extracellular; that stretch reads SR. Residues 102–122 form a helical membrane-spanning segment; sequence VIVGLAIGISSATIPVYLAEV. Residues 123 to 136 are Cytoplasmic-facing; it reads TSPKHRGATIVLNN. Residues 137 to 157 traverse the membrane as a helical segment; sequence LFLTGGQFVAAGFTAIMVVFT. Residues 158-164 lie on the Extracellular side of the membrane; it reads SKNIGWR. A helical membrane pass occupies residues 165 to 185; it reads VAIGIGALPAVVQAFCLLFFL. At 186–245 the chain is on the cytoplasmic side; it reads PESPRWLLSKGHADRAKAVADKFEVDLCEFQEGDELPSVRIDYRPLMARDMRFRVVLSSG. The helical transmembrane segment at 246 to 266 threads the bilayer; sequence LQIIQQFSGINTIMYYSSVIL. Residues 267–276 lie on the Extracellular side of the membrane; it reads YDAGFRDAIM. A helical membrane pass occupies residues 277–297; it reads PVVLSIPLAFMNALFTAVAIF. Topologically, residues 298-308 are cytoplasmic; the sequence is TVDRFGRRRML. Residues 309-329 form a helical membrane-spanning segment; the sequence is LISVFGCLVLLVVIAIIGFFI. Residues 330-339 lie on the Extracellular side of the membrane; the sequence is GTRISYSVGG. Residues 340 to 360 traverse the membrane as a helical segment; it reads GLFLALLAVFLALYAPGIGCI. Over 361–385 the chain is Cytoplasmic; that stretch reads PWVIMGEIFPTHLRTSAASVATMAN. A helical transmembrane segment spans residues 386–406; it reads WGANVLVSQVFPILMGAIGVG. Position 407 (Gly-407) is a topological domain, extracellular. A helical membrane pass occupies residues 408–428; that stretch reads TFTIISGLMALGCIFVYFFAV. At 429–547 the chain is on the cytoplasmic side; the sequence is ETKGLTLEQI…AIKAAPHEPK (119 aa). Disordered stretches follow at residues 449 to 468 and 510 to 547; these read PPRFHEEGESGESGAGYRED and VSNKFEERATSSSSDPQSLENQDEVRQAAIKAAPHEPK. Residues 519–529 show a composition bias toward polar residues; it reads TSSSSDPQSLE.

This sequence belongs to the major facilitator superfamily. Sugar transporter (TC 2.A.1.1) family.

The protein resides in the membrane. The protein is Membrane transporter D1 of Leishmania donovani.